A 288-amino-acid chain; its full sequence is Bifunctional protein FolD (288 aa).

NADP(+) is bound by residues 163-165 (GRS), serine 188, and isoleucine 229.

The protein belongs to the tetrahydrofolate dehydrogenase/cyclohydrolase family. Homodimer.

It carries out the reaction (6R)-5,10-methylene-5,6,7,8-tetrahydrofolate + NADP(+) = (6R)-5,10-methenyltetrahydrofolate + NADPH. It catalyses the reaction (6R)-5,10-methenyltetrahydrofolate + H2O = (6R)-10-formyltetrahydrofolate + H(+). Its pathway is one-carbon metabolism; tetrahydrofolate interconversion. Functionally, catalyzes the oxidation of 5,10-methylenetetrahydrofolate to 5,10-methenyltetrahydrofolate and then the hydrolysis of 5,10-methenyltetrahydrofolate to 10-formyltetrahydrofolate. This Campylobacter curvus (strain 525.92) protein is Bifunctional protein FolD.